The chain runs to 257 residues: NAD-capped RNA hydrolase NudC (257 aa).

Arg69 contacts substrate. Zn(2+)-binding residues include Cys98 and Cys101. Position 111 (Glu111) interacts with substrate. 2 residues coordinate Zn(2+): Cys116 and Cys119. Residue Tyr124 participates in substrate binding. Residues 125-248 enclose the Nudix hydrolase domain; sequence PQIAPCIIVA…TVARRLIEDT (124 aa). Residues Ala158, Glu174, and Glu178 each coordinate a divalent metal cation. A Nudix box motif is present at residues 159 to 180; the sequence is GFVEVGETLEQAVAREVMEESG. 192–199 contributes to the substrate binding site; sequence QPWPFPQS. Residue Glu219 coordinates a divalent metal cation. Substrate is bound at residue Ala241.

It belongs to the Nudix hydrolase family. NudC subfamily. In terms of assembly, homodimer. The cofactor is Mg(2+). Mn(2+) is required as a cofactor. Zn(2+) serves as cofactor.

The catalysed reaction is a 5'-end NAD(+)-phospho-ribonucleoside in mRNA + H2O = a 5'-end phospho-adenosine-phospho-ribonucleoside in mRNA + beta-nicotinamide D-ribonucleotide + 2 H(+). It catalyses the reaction NAD(+) + H2O = beta-nicotinamide D-ribonucleotide + AMP + 2 H(+). It carries out the reaction NADH + H2O = reduced beta-nicotinamide D-ribonucleotide + AMP + 2 H(+). In terms of biological role, mRNA decapping enzyme that specifically removes the nicotinamide adenine dinucleotide (NAD) cap from a subset of mRNAs by hydrolyzing the diphosphate linkage to produce nicotinamide mononucleotide (NMN) and 5' monophosphate mRNA. The NAD-cap is present at the 5'-end of some mRNAs and stabilizes RNA against 5'-processing. Has preference for mRNAs with a 5'-end purine. Catalyzes the hydrolysis of a broad range of dinucleotide pyrophosphates. This is NAD-capped RNA hydrolase NudC from Salmonella agona (strain SL483).